The sequence spans 494 residues: Alpha-amylase-related protein (494 aa).

The N-terminal stretch at 1 to 20 (MIKFALALTLCLAGASLSLA) is a signal peptide. At glutamine 21 the chain carries Pyrrolidone carboxylic acid. The cysteines at positions 48 and 104 are disulfide-linked. Asparagine 118, glutamine 169, and aspartate 178 together coordinate Ca(2+). A disulfide bridge connects residues cysteine 157 and cysteine 171. Arginine 206 contacts chloride. The Nucleophile role is filled by aspartate 208. Residue histidine 212 participates in Ca(2+) binding. The active-site Proton donor is the glutamate 245. Positions 308 and 343 each coordinate chloride. Intrachain disulfides connect cysteine 376/cysteine 382, cysteine 418/cysteine 441, and cysteine 448/cysteine 460.

This sequence belongs to the glycosyl hydrolase 13 family. As to quaternary structure, monomer. Requires Ca(2+) as cofactor. The cofactor is chloride.

It localises to the secreted. The catalysed reaction is Endohydrolysis of (1-&gt;4)-alpha-D-glucosidic linkages in polysaccharides containing three or more (1-&gt;4)-alpha-linked D-glucose units.. This chain is Alpha-amylase-related protein (Amyrel), found in Drosophila bakoue (Fruit fly).